Here is a 279-residue protein sequence, read N- to C-terminus: Cytochrome c1 (279 aa).

An N-terminal signal peptide occupies residues 1–21 (MKKLLISAVSALVLGSGAAFA). Heme c contacts are provided by Cys-55, Cys-58, His-59, and Met-204. Residues 248–266 (MGLVAMVMLGLLSVMLYLT) traverse the membrane as a helical segment.

The main subunits of complex b-c1 are: cytochrome b, cytochrome c1 and the Rieske protein. Binds 1 heme c group covalently per subunit.

It is found in the cell membrane. Functionally, component of the ubiquinol-cytochrome c reductase complex (complex III or cytochrome b-c1 complex), which is a respiratory chain that generates an electrochemical potential coupled to ATP synthesis. c1 functions as an electron donor to cytochrome c. The protein is Cytochrome c1 (petC) of Rhodobacter capsulatus (strain ATCC BAA-309 / NBRC 16581 / SB1003).